Reading from the N-terminus, the 155-residue chain is Small ribosomal subunit protein uS7c (155 aa).

It belongs to the universal ribosomal protein uS7 family. As to quaternary structure, part of the 30S ribosomal subunit.

It is found in the plastid. Its subcellular location is the chloroplast. In terms of biological role, one of the primary rRNA binding proteins, it binds directly to 16S rRNA where it nucleates assembly of the head domain of the 30S subunit. This Cedrus deodara (Deodar cedar) protein is Small ribosomal subunit protein uS7c (rps7).